The primary structure comprises 246 residues: Dolichol-phosphate mannosyltransferase subunit 1 (246 aa).

GDP-alpha-D-mannose-binding residues include Pro20, Tyr22, Glu24, Val49, Asp51, Asp104, Ala105, Asp106, Arg133, Arg220, and Lys226. Asp106 serves as a coordination point for Mg(2+). Asp106 is a binding site for Mn(2+).

The protein belongs to the glycosyltransferase 2 family. In terms of assembly, component of the dolichol-phosphate mannose (DPM) synthase complex composed of DPMS1, DPMS2 and DPMS3; in the complex interacts directly with DPMS3. Requires Mg(2+) as cofactor. The cofactor is Mn(2+). It depends on Ca(2+) as a cofactor.

The protein resides in the endoplasmic reticulum membrane. The enzyme catalyses a di-trans,poly-cis-dolichyl phosphate + GDP-alpha-D-mannose = a di-trans,poly-cis-dolichyl beta-D-mannosyl phosphate + GDP. Its pathway is protein modification; protein glycosylation. Functionally, transfers mannose from GDP-mannose to dolichol monophosphate to form dolichol phosphate mannose (Dol-P-Man) which is the mannosyl donor in pathways leading to N-glycosylation, glycosyl phosphatidylinositol membrane anchoring, and O-mannosylation of proteins; catalytic subunit of the dolichol-phosphate mannose (DPM) synthase complex. Plays a role in plant development and physiology, sensitivity to ammonium stress and endoplasmic reticulum stress response. In Arabidopsis thaliana (Mouse-ear cress), this protein is Dolichol-phosphate mannosyltransferase subunit 1.